Reading from the N-terminus, the 192-residue chain is uncharacterized protein (192 aa).

The Nudix hydrolase domain maps to 29–160; the sequence is HRQAAVLIPI…PLDIYRRGDS (132 aa). The short motif at 67 to 89 is the Nudix box element; sequence GAVDDTDASVIAAALREAEEEVA. The Mg(2+) site is built by Glu83 and Glu87.

This sequence belongs to the Nudix hydrolase family. PCD1 subfamily. Mn(2+) is required as a cofactor. The cofactor is Mg(2+).

In terms of biological role, probably mediates the hydrolysis of some nucleoside diphosphate derivatives. This is an uncharacterized protein from Shigella flexneri serotype 5b (strain 8401).